A 101-amino-acid polypeptide reads, in one-letter code: Apolipoprotein C-II (101 aa).

The N-terminal stretch at 1-22 is a signal peptide; the sequence is MGTRLLPALFLVLLVLGFEVQG. The segment at 23–38 is O-glycosylated at one site; that stretch reads TQQPQQDEMPSPTFLT. Positions 66–74 are lipid binding; the sequence is AVDEKLRDL. The tract at residues 78 to 101 is lipoprotein lipase cofactor; the sequence is STAAMSTYTGIFTDQVLSVLKGEE.

It belongs to the apolipoprotein C2 family. Proapolipoprotein C-II is synthesized as a sialic acid containing glycoprotein which is subsequently desialylated prior to its proteolytic processing. Post-translationally, proapolipoprotein C-II, the major form found in plasma undergoes proteolytic cleavage of its N-terminal hexapeptide to generate apolipoprotein C-II, which occurs as the minor form in plasma. In terms of tissue distribution, liver and intestine.

Its subcellular location is the secreted. Component of chylomicrons, very low-density lipoproteins (VLDL), low-density lipoproteins (LDL), and high-density lipoproteins (HDL) in plasma. Plays an important role in lipoprotein metabolism as an activator of lipoprotein lipase. Both proapolipoprotein C-II and apolipoprotein C-II can activate lipoprotein lipase. In normolipidemic individuals, it is mainly distributed in the HDL, whereas in hypertriglyceridemic individuals, predominantly found in the VLDL and LDL. The protein is Apolipoprotein C-II (APOC2) of Homo sapiens (Human).